The sequence spans 73 residues: MSLELLSQLETKIQATLENIELLKMELDEEKQKNEALLSQQQELTQKNQQLQQDLNSWSDKVNGLVGLLNNEI.

The stretch at 3 to 66 (LELLSQLETK…SWSDKVNGLV (64 aa)) forms a coiled coil.

Belongs to the ZapB family. Homodimer. The ends of the coiled-coil dimer bind to each other, forming polymers. Interacts with FtsZ.

The protein localises to the cytoplasm. Functionally, non-essential, abundant cell division factor that is required for proper Z-ring formation. It is recruited early to the divisome by direct interaction with FtsZ, stimulating Z-ring assembly and thereby promoting cell division earlier in the cell cycle. Its recruitment to the Z-ring requires functional FtsA or ZipA. This is Cell division protein ZapB from Shewanella frigidimarina (strain NCIMB 400).